We begin with the raw amino-acid sequence, 394 residues long: MTIDTAAWPAGRVNSLGFAKPPHETRVVAAMSGGVDSSVVAAMLKAEGYDVIGITLQLYDHGAAIEKKGACCAGQDIHDARNVSDAIGIPHYVLDYESRFREQVMEDFADTYLSGSTPIPCIRCNQTVKFADLLATAKELGADCLATGHYIRRTDGPEGPELHRAQDASRDQSYFLFATTRAQLDFLRFPLGSLPKSEVRELAEKFALQVAAKPDSQDICFVPDGSYAKVVEKLRPGSGRGGEIVHLDGRVLGKHEGVIHYTIGQRRGLGVATGDPLFVVKIDAPARRVIVGPREALMTRGLLLEELNWLGQGSLEEAATHGARVLIRVRSTRPPVPGRLGYEDGVPAVFFDAPEEGVARGQAAVLYDLEGSTRILGGGFIARPLPADERVVAA.

Residues 30–37 (AMSGGVDS) and L56 each bind ATP. C124 serves as the catalytic Nucleophile. Residues C124 and C220 are joined by a disulfide bond. G148 serves as a coordination point for ATP. Residues 170 to 172 (RDQ) are interaction with tRNA. The Cysteine persulfide intermediate role is filled by C220.

This sequence belongs to the MnmA/TRMU family.

The protein localises to the cytoplasm. It carries out the reaction S-sulfanyl-L-cysteinyl-[protein] + uridine(34) in tRNA + AH2 + ATP = 2-thiouridine(34) in tRNA + L-cysteinyl-[protein] + A + AMP + diphosphate + H(+). In terms of biological role, catalyzes the 2-thiolation of uridine at the wobble position (U34) of tRNA, leading to the formation of s(2)U34. This chain is tRNA-specific 2-thiouridylase MnmA, found in Hyphomonas neptunium (strain ATCC 15444).